Here is a 272-residue protein sequence, read N- to C-terminus: Octanoyltransferase (272 aa).

Over residues M1–T12 the composition is skewed to polar residues. Residues M1 to K20 form a disordered region. The BPL/LPL catalytic domain occupies H65–M255. Residues R103–H110, A175–G177, and G188–A190 contribute to the substrate site. C206 serves as the catalytic Acyl-thioester intermediate.

Belongs to the LipB family.

The protein localises to the cytoplasm. It carries out the reaction octanoyl-[ACP] + L-lysyl-[protein] = N(6)-octanoyl-L-lysyl-[protein] + holo-[ACP] + H(+). It participates in protein modification; protein lipoylation via endogenous pathway; protein N(6)-(lipoyl)lysine from octanoyl-[acyl-carrier-protein]: step 1/2. Functionally, catalyzes the transfer of endogenously produced octanoic acid from octanoyl-acyl-carrier-protein onto the lipoyl domains of lipoate-dependent enzymes. Lipoyl-ACP can also act as a substrate although octanoyl-ACP is likely to be the physiological substrate. The protein is Octanoyltransferase of Cutibacterium acnes (strain DSM 16379 / KPA171202) (Propionibacterium acnes).